A 535-amino-acid polypeptide reads, in one-letter code: EGF domain-specific O-linked N-acetylglucosamine transferase (535 aa).

The signal sequence occupies residues 1 to 16; that stretch reads MFILLMFVLLLQEILA. Asn22 and Asn271 each carry an N-linked (GlcNAc...) asparagine glycan. A Required for optimal activity motif is present at residues 303–305; it reads DYD. 2 N-linked (GlcNAc...) asparagine glycosylation sites follow: Asn362 and Asn501.

Belongs to the glycosyltransferase 61 family.

It localises to the endoplasmic reticulum lumen. The catalysed reaction is L-seryl-[protein] + UDP-N-acetyl-alpha-D-glucosamine = 3-O-(N-acetyl-beta-D-glucosaminyl)-L-seryl-[protein] + UDP + H(+). It carries out the reaction L-threonyl-[protein] + UDP-N-acetyl-alpha-D-glucosamine = 3-O-(N-acetyl-beta-D-glucosaminyl)-L-threonyl-[protein] + UDP + H(+). Its function is as follows. Catalyzes the transfer of a single N-acetylglucosamine from UDP-GlcNAc to a serine or threonine residue in extracellular proteins resulting in their modification with a beta-linked N-acetylglucosamine (O-GlcNAc). Specifically glycosylates the Thr residue located between the fifth and sixth conserved cysteines of folded EGF-like domains. This Gallus gallus (Chicken) protein is EGF domain-specific O-linked N-acetylglucosamine transferase (EOGT).